A 342-amino-acid polypeptide reads, in one-letter code: 4-hydroxythreonine-4-phosphate dehydrogenase (342 aa).

Substrate is bound by residues His139 and Thr140. His174, His219, and His274 together coordinate a divalent metal cation. The substrate site is built by Lys282, Asn291, and Arg300.

Belongs to the PdxA family. Homodimer. Requires Zn(2+) as cofactor. Mg(2+) serves as cofactor. The cofactor is Co(2+).

Its subcellular location is the cytoplasm. The enzyme catalyses 4-(phosphooxy)-L-threonine + NAD(+) = 3-amino-2-oxopropyl phosphate + CO2 + NADH. It participates in cofactor biosynthesis; pyridoxine 5'-phosphate biosynthesis; pyridoxine 5'-phosphate from D-erythrose 4-phosphate: step 4/5. In terms of biological role, catalyzes the NAD(P)-dependent oxidation of 4-(phosphooxy)-L-threonine (HTP) into 2-amino-3-oxo-4-(phosphooxy)butyric acid which spontaneously decarboxylates to form 3-amino-2-oxopropyl phosphate (AHAP). The polypeptide is 4-hydroxythreonine-4-phosphate dehydrogenase (Mesorhizobium japonicum (strain LMG 29417 / CECT 9101 / MAFF 303099) (Mesorhizobium loti (strain MAFF 303099))).